The following is a 21-amino-acid chain: Magainin-B1 (21 aa).

In terms of tissue distribution, expressed by the skin glands.

The protein localises to the secreted. Functionally, has no antimicrobial activity against tested bacteria. The sequence is that of Magainin-B1 from Xenopus borealis (Kenyan clawed frog).